Reading from the N-terminus, the 66-residue chain is Large ribosomal subunit protein bL31 (66 aa).

Residues Cys16, Cys18, Cys36, and Cys39 each contribute to the Zn(2+) site.

This sequence belongs to the bacterial ribosomal protein bL31 family. Type A subfamily. As to quaternary structure, part of the 50S ribosomal subunit. The cofactor is Zn(2+).

Functionally, binds the 23S rRNA. The polypeptide is Large ribosomal subunit protein bL31 (Clostridioides difficile (strain 630) (Peptoclostridium difficile)).